The primary structure comprises 141 residues: Hemoglobin subunit alpha (141 aa).

Residues 1 to 141 (VLSPDDKKHV…VSTVLTSKYR (141 aa)) enclose the Globin domain. S3 carries the post-translational modification Phosphoserine. N6-succinyllysine is present on residues K7 and K11. Residue K16 is modified to N6-acetyllysine; alternate. The residue at position 16 (K16) is an N6-succinyllysine; alternate. Y24 is modified (phosphotyrosine). The residue at position 35 (S35) is a Phosphoserine. K40 carries the N6-succinyllysine modification. S49 is modified (phosphoserine). O2 is bound at residue H58. H87 is a heme b binding site. The residue at position 102 (S102) is a Phosphoserine. T108 carries the phosphothreonine modification. S124 and S131 each carry phosphoserine. Residues T134 and T137 each carry the phosphothreonine modification. S138 is modified (phosphoserine).

Belongs to the globin family. As to quaternary structure, heterotetramer of two alpha chains and two beta chains. Red blood cells.

Involved in oxygen transport from the lung to the various peripheral tissues. Functionally, hemopressin acts as an antagonist peptide of the cannabinoid receptor CNR1. Hemopressin-binding efficiently blocks cannabinoid receptor CNR1 and subsequent signaling. This chain is Hemoglobin subunit alpha (HBA), found in Cercocebus atys (Sooty mangabey).